Reading from the N-terminus, the 434-residue chain is CinA-like protein (434 aa).

Belongs to the CinA family.

In Mycolicibacterium paratuberculosis (strain ATCC BAA-968 / K-10) (Mycobacterium paratuberculosis), this protein is CinA-like protein.